The following is a 785-amino-acid chain: uncharacterized protein (785 aa).

Residues 1-93 (MSWVMVSPEL…GGAYAAAEAA (93 aa)) form the PE domain.

It belongs to the mycobacterial PE family. PGRS subfamily.

This is an uncharacterized protein from Mycobacterium tuberculosis (strain CDC 1551 / Oshkosh).